Reading from the N-terminus, the 263-residue chain is Putative protein JayE (263 aa).

The protein belongs to the Mu gp47/PBSX XkdT family.

In Escherichia coli (strain K12), this protein is Putative protein JayE (jayE).